The primary structure comprises 277 residues: MRRPAPYHRVAAIMTILSLAGAGHQARLDARGGMLTGPTANLAPGHVQANLAILPQAVAGDFLRFCQRNPKPCPLLAVSEPGDPSLPELGLDIDIRTDVPRYRVWRDGKLVDEPLDVRGLWRDDLVAFLIGCSFSFEEAMLENGLPVRHIEQGCNVPMYRTNIATHPAGPFSGPLVVSMRPLKAADAIRAIQVTSRFPSVHGAPVHLGDPALIGIADLGRPDYGDAVEIRAGEIPVFWACGVTPQSVVAAVRPEFCITHAPGHMLVTDLLNSRLAAF.

This sequence belongs to the D-glutamate cyclase family.

The protein is Putative hydro-lyase BP1875 of Bordetella pertussis (strain Tohama I / ATCC BAA-589 / NCTC 13251).